A 126-amino-acid chain; its full sequence is Histone H2B type 1-C/E/G (126 aa).

Residues 1 to 12 (MPEPAKSAPAPK) show a composition bias toward low complexity. A disordered region spans residues 1 to 36 (MPEPAKSAPAPKKGSKKAVTKAQKKDGKKRKRSRKE). Pro2 carries the post-translational modification N-acetylproline. At Glu3 the chain carries ADP-ribosyl glutamic acid. The residue at position 6 (Lys6) is an N6-(2-hydroxyisobutyryl)lysine; alternate. Lys6 carries the post-translational modification N6-(beta-hydroxybutyryl)lysine; alternate. N6-acetyllysine; alternate is present on Lys6. Residue Lys6 is modified to N6-butyryllysine; alternate. Lys6 is modified (N6-crotonyllysine; alternate). Position 6 is an N6-lactoyllysine; alternate (Lys6). Lys6 participates in a covalent cross-link: Glycyl lysine isopeptide (Lys-Gly) (interchain with G-Cter in SUMO2); alternate. Residue Ser7 is modified to ADP-ribosylserine. Residue Lys12 is modified to N6-(beta-hydroxybutyryl)lysine; alternate. N6-acetyllysine; alternate occurs at positions 12 and 13. Lys12 and Lys13 each carry N6-crotonyllysine; alternate. The residue at position 12 (Lys12) is an N6-lactoyllysine; alternate. The residue at position 13 (Lys13) is an N6-(2-hydroxyisobutyryl)lysine; alternate. Ser15 carries the post-translational modification Phosphoserine; by STK4/MST1. 4 positions are modified to N6-acetyllysine; alternate: Lys16, Lys17, Lys21, and Lys24. Lys16, Lys17, Lys21, and Lys24 each carry N6-crotonyllysine; alternate. N6-lactoyllysine; alternate occurs at positions 16, 17, 21, and 24. At Lys17 the chain carries N6-glutaryllysine; alternate. N6-(2-hydroxyisobutyryl)lysine; alternate is present on residues Lys21 and Lys24. The residue at position 21 (Lys21) is an N6-(beta-hydroxybutyryl)lysine; alternate. Lys21 is modified (N6-butyryllysine; alternate). Lys21 participates in a covalent cross-link: Glycyl lysine isopeptide (Lys-Gly) (interchain with G-Cter in SUMO2); alternate. Lys25 is modified (N6-(2-hydroxyisobutyryl)lysine). Lys35 carries the N6-(2-hydroxyisobutyryl)lysine; alternate modification. Residue Lys35 is modified to N6-(beta-hydroxybutyryl)lysine; alternate. At Lys35 the chain carries N6-crotonyllysine; alternate. The residue at position 35 (Lys35) is an N6-glutaryllysine; alternate. Position 35 is an N6-succinyllysine; alternate (Lys35). Lys35 participates in a covalent cross-link: Glycyl lysine isopeptide (Lys-Gly) (interchain with G-Cter in ubiquitin); alternate. Glu36 bears the PolyADP-ribosyl glutamic acid mark. Ser37 carries the phosphoserine; by AMPK modification. 3 positions are modified to N6-(2-hydroxyisobutyryl)lysine; alternate: Lys44, Lys47, and Lys58. Lys44 is modified (N6-lactoyllysine; alternate). An N6-glutaryllysine; alternate mark is found at Lys44 and Lys47. Lys47 is modified (N6-methyllysine; alternate). Position 58 is an N6,N6-dimethyllysine; alternate (Lys58). Residue Arg80 is modified to Dimethylated arginine. Lys86 carries the N6-(2-hydroxyisobutyryl)lysine; alternate modification. N6-acetyllysine; alternate is present on Lys86. Lys86 bears the N6-lactoyllysine; alternate mark. Lys86 is subject to N6,N6,N6-trimethyllysine; alternate. An omega-N-methylarginine mark is found at Arg87 and Arg93. Lys109 bears the N6-(2-hydroxyisobutyryl)lysine; alternate mark. Lys109 is modified (N6-(beta-hydroxybutyryl)lysine; alternate). An N6-lactoyllysine; alternate modification is found at Lys109. At Lys109 the chain carries N6-glutaryllysine; alternate. Lys109 is modified (N6-methyllysine; alternate). O-linked (GlcNAc) serine glycosylation occurs at Ser113. A Phosphothreonine modification is found at Thr116. N6-(2-hydroxyisobutyryl)lysine; alternate occurs at positions 117 and 121. Lys117 is modified (N6-(beta-hydroxybutyryl)lysine; alternate). Residues Lys117 and Lys121 each carry the N6-lactoyllysine; alternate modification. N6-glutaryllysine; alternate is present on residues Lys117 and Lys121. N6-succinyllysine; alternate is present on residues Lys117 and Lys121. Lys117 carries the N6-methylated lysine; alternate modification. Residue Lys121 forms a Glycyl lysine isopeptide (Lys-Gly) (interchain with G-Cter in ubiquitin); alternate linkage.

This sequence belongs to the histone H2B family. As to quaternary structure, the nucleosome is a histone octamer containing two molecules each of H2A, H2B, H3 and H4 assembled in one H3-H4 heterotetramer and two H2A-H2B heterodimers. The octamer wraps approximately 147 bp of DNA. Interacts with VRK1; the interaction is mediated by the nucleosome acidic patch, a cluster of negatively charged residues of H2A and H2B forming a cleft within the nucleosome core. Post-translationally, monoubiquitination at Lys-35 (H2BK34Ub) by the MSL1/MSL2 dimer is required for histone H3 'Lys-4' (H3K4me) and 'Lys-79' (H3K79me) methylation and transcription activation at specific gene loci, such as HOXA9 and MEIS1 loci. Similarly, monoubiquitination at Lys-121 (H2BK120Ub) by the RNF20/40 complex gives a specific tag for epigenetic transcriptional activation and is also prerequisite for histone H3 'Lys-4' and 'Lys-79' methylation. It also functions cooperatively with the FACT dimer to stimulate elongation by RNA polymerase II. H2BK120Ub also acts as a regulator of mRNA splicing: deubiquitination by USP49 is required for efficient cotranscriptional splicing of a large set of exons. In terms of processing, phosphorylated on Ser-15 (H2BS14ph) by STK4/MST1 during apoptosis; which facilitates apoptotic chromatin condensation. Also phosphorylated on Ser-15 in response to DNA double strand breaks (DSBs), and in correlation with somatic hypermutation and immunoglobulin class-switch recombination. Phosphorylation at Ser-37 (H2BS36ph) by AMPK in response to stress promotes transcription. GlcNAcylation at Ser-113 promotes monoubiquitination of Lys-121. It fluctuates in response to extracellular glucose, and associates with transcribed genes. Post-translationally, ADP-ribosylated by PARP1 or PARP2 on Ser-7 (H2BS6ADPr) in response to DNA damage. H2BS6ADPr promotes recruitment of CHD1L. Mono-ADP-ribosylated on Glu-3 (H2BE2ADPr) by PARP3 in response to single-strand breaks. Poly ADP-ribosylation on Glu-36 (H2BE35ADPr) by PARP1 regulates adipogenesis: it inhibits phosphorylation at Ser-37 (H2BS36ph), thereby blocking expression of pro-adipogenetic genes. In terms of processing, crotonylation (Kcr) is specifically present in male germ cells and marks testis-specific genes in post-meiotic cells, including X-linked genes that escape sex chromosome inactivation in haploid cells. Crotonylation marks active promoters and enhancers and confers resistance to transcriptional repressors. It is also associated with post-meiotically activated genes on autosomes. Hydroxybutyrylation of histones is induced by starvation. Post-translationally, lactylated in macrophages by EP300/P300 by using lactoyl-CoA directly derived from endogenous or exogenous lactate, leading to stimulates gene transcription.

It is found in the nucleus. The protein resides in the chromosome. Core component of nucleosome. Nucleosomes wrap and compact DNA into chromatin, limiting DNA accessibility to the cellular machineries which require DNA as a template. Histones thereby play a central role in transcription regulation, DNA repair, DNA replication and chromosomal stability. DNA accessibility is regulated via a complex set of post-translational modifications of histones, also called histone code, and nucleosome remodeling. This chain is Histone H2B type 1-C/E/G, found in Mus musculus (Mouse).